The following is a 1728-amino-acid chain: Protein NETWORKED 1A (1728 aa).

Positions tyrosine 13–leucine 92 constitute an NAB domain. Coiled-coil stretches lie at residues leucine 155–glutamate 446, methionine 476–isoleucine 827, phenylalanine 857–asparagine 885, glutamine 954–glutamine 1016, glutamate 1090–valine 1323, leucine 1403–arginine 1431, and arginine 1576–lysine 1684. Residues alanine 1419–lysine 1441 are disordered. Over residues arginine 1424–aspartate 1439 the composition is skewed to basic residues.

The protein belongs to the NET family. In terms of assembly, interacts with F-actin. In terms of tissue distribution, expressed in root meristems and at very low levels throughout mature vasculature.

Its subcellular location is the cytoplasm. It is found in the cytoskeleton. The protein resides in the cell membrane. It localises to the cell junction. The protein localises to the plasmodesma. Plant-specific actin binding protein. Associates with F-actin at the plasma membrane and plasmodesmata. May be part of a membrane-cytoskeletal adapter complex. The sequence is that of Protein NETWORKED 1A from Arabidopsis thaliana (Mouse-ear cress).